The following is a 220-amino-acid chain: Small ribosomal subunit protein eS1 (220 aa).

Belongs to the eukaryotic ribosomal protein eS1 family.

This chain is Small ribosomal subunit protein eS1, found in Pyrobaculum arsenaticum (strain DSM 13514 / JCM 11321 / PZ6).